A 1604-amino-acid chain; its full sequence is E3 ubiquitin-protein ligase HECW1 (1604 aa).

In terms of domain architecture, C2 spans 182–318; it reads SAAPIFKGIG…LERHAIGDRV (137 aa). Disordered regions lie at residues 350–539, 572–604, 642–667, and 727–826; these read DEEI…CSLP, PSAQ…LSEV, GIGA…QQGA, and STVF…TIDE. Polar residues predominate over residues 362-380; the sequence is SAETQDSIMNSMVGNSNGE. Over residues 387 to 396 the composition is skewed to basic and acidic residues; sequence EFCKDAKPES. A compositionally biased stretch (polar residues) spans 398-412; sequence SEGNGVNSSENQNQE. 2 stretches are compositionally biased toward acidic residues: residues 435 to 444 and 458 to 469; these read APEEPGELQD and EVAEGLPLDEDS. The segment covering 494–505 has biased composition (basic and acidic residues); it reads GAREEEMQKGKD. Over residues 580 to 589 the composition is skewed to acidic residues; it reads TEEEDGLEEE. Basic and acidic residues predominate over residues 590-601; it reads STLKESSEKDGL. Composition is skewed to polar residues over residues 654 to 667, 748 to 762, and 803 to 812; these read STGS…QQGA, DSVQ…STNG, and HNSQPISQLP. The 34-residue stretch at 826–859 folds into the WW 1 domain; that stretch reads EPLPPNWEARIDSHGRVFYVDHINRTTTWQRPSM. Residue serine 871 is modified to Phosphoserine. Positions 871 to 898 form a coiled coil; it reads SVHQMEQLNRRYQNIQRTMATERAEEDS. The disordered stretch occupies residues 890–936; the sequence is ATERAEEDSGNQNSEQIPDGGGGGGGGSDSEAESSQSSLDLRREGSL. The segment covering 908-917 has biased composition (gly residues); sequence DGGGGGGGGS. Serine 935 and serine 937 each carry phosphoserine. Residues 1016-1049 form the WW 2 domain; the sequence is LELPRGWEIKTDHQGKSFFVDHNSRATTFIDPRI. In terms of domain architecture, HECT spans 1269–1604; it reads SRKELQRNKL…VEETSTFGLE (336 aa). Cysteine 1572 serves as the catalytic Glycyl thioester intermediate.

In terms of assembly, interacts with DVL1 and SSR3. Predominantly expressed in neurons of the spinal cord.

The protein localises to the cytoplasm. It carries out the reaction S-ubiquitinyl-[E2 ubiquitin-conjugating enzyme]-L-cysteine + [acceptor protein]-L-lysine = [E2 ubiquitin-conjugating enzyme]-L-cysteine + N(6)-ubiquitinyl-[acceptor protein]-L-lysine.. It functions in the pathway protein modification; protein ubiquitination. Its function is as follows. E3 ubiquitin-protein ligase that mediates ubiquitination and subsequent degradation of DVL1. The polypeptide is E3 ubiquitin-protein ligase HECW1 (Hecw1) (Mus musculus (Mouse)).